Reading from the N-terminus, the 508-residue chain is Photosystem II CP47 reaction center protein (508 aa).

6 helical membrane passes run S21–S36, I101–W115, G140–F156, I203–S218, V237–V252, and T457–R472.

This sequence belongs to the PsbB/PsbC family. PsbB subfamily. As to quaternary structure, PSII is composed of 1 copy each of membrane proteins PsbA, PsbB, PsbC, PsbD, PsbE, PsbF, PsbH, PsbI, PsbJ, PsbK, PsbL, PsbM, PsbT, PsbX, PsbY, PsbZ, Psb30/Ycf12, at least 3 peripheral proteins of the oxygen-evolving complex and a large number of cofactors. It forms dimeric complexes. Binds multiple chlorophylls. PSII binds additional chlorophylls, carotenoids and specific lipids. serves as cofactor.

The protein localises to the plastid. It is found in the chloroplast thylakoid membrane. Its function is as follows. One of the components of the core complex of photosystem II (PSII). It binds chlorophyll and helps catalyze the primary light-induced photochemical processes of PSII. PSII is a light-driven water:plastoquinone oxidoreductase, using light energy to abstract electrons from H(2)O, generating O(2) and a proton gradient subsequently used for ATP formation. This chain is Photosystem II CP47 reaction center protein, found in Oryza nivara (Indian wild rice).